The chain runs to 430 residues: tRNA(Ile)-lysidine synthase (430 aa).

An ATP-binding site is contributed by Ser-27–Ser-32.

This sequence belongs to the tRNA(Ile)-lysidine synthase family.

The protein localises to the cytoplasm. It catalyses the reaction cytidine(34) in tRNA(Ile2) + L-lysine + ATP = lysidine(34) in tRNA(Ile2) + AMP + diphosphate + H(+). Ligates lysine onto the cytidine present at position 34 of the AUA codon-specific tRNA(Ile) that contains the anticodon CAU, in an ATP-dependent manner. Cytidine is converted to lysidine, thus changing the amino acid specificity of the tRNA from methionine to isoleucine. In Rickettsia bellii (strain OSU 85-389), this protein is tRNA(Ile)-lysidine synthase.